Reading from the N-terminus, the 460-residue chain is Argininosuccinate lyase (460 aa).

It belongs to the lyase 1 family. Argininosuccinate lyase subfamily.

It is found in the cytoplasm. The catalysed reaction is 2-(N(omega)-L-arginino)succinate = fumarate + L-arginine. It functions in the pathway amino-acid biosynthesis; L-arginine biosynthesis; L-arginine from L-ornithine and carbamoyl phosphate: step 3/3. This Alteromonas mediterranea (strain DSM 17117 / CIP 110805 / LMG 28347 / Deep ecotype) protein is Argininosuccinate lyase.